The sequence spans 304 residues: Acetylglutamate kinase (304 aa).

Substrate-binding positions include 72 to 73 (GG), Arg94, and Asn199.

It belongs to the acetylglutamate kinase family. ArgB subfamily.

The protein resides in the cytoplasm. It catalyses the reaction N-acetyl-L-glutamate + ATP = N-acetyl-L-glutamyl 5-phosphate + ADP. Its pathway is amino-acid biosynthesis; L-arginine biosynthesis; N(2)-acetyl-L-ornithine from L-glutamate: step 2/4. Catalyzes the ATP-dependent phosphorylation of N-acetyl-L-glutamate. In Methylobacterium nodulans (strain LMG 21967 / CNCM I-2342 / ORS 2060), this protein is Acetylglutamate kinase.